The chain runs to 277 residues: Inner kinetochore subunit sim4 (277 aa).

Residues 96–138 (NNISDLKKNLHSNKKLEAVLKEELHQIKKFSSDLQSLKSSMGE) are a coiled coil.

It belongs to the CENP-K/MCM22 family. As to quaternary structure, component of the inner kinetochore constitutive centromere-associated network (CCAN) (also known as central kinetochore Sim4 complex in fission yeast), which is composed of at least cnl2, cnp3, cnp20, fta1, fta2, fta3, fta4, fta6, fta7, mal2, mhf1, mhf2, mis6, mis15, mis17, sim4 and wip1. Interacts with mis6 and dad1.

It is found in the nucleus. The protein resides in the chromosome. It localises to the centromere. Its function is as follows. Component of the kinetochore, a multiprotein complex that assembles on centromeric DNA and attaches chromosomes to spindle microtubules, mediating chromosome segregation and sister chromatid segregation during meiosis and mitosis. Component of the inner kinetochore constitutive centromere-associated network (CCAN), which serves as a structural platform for outer kinetochore assembly. The sequence is that of Inner kinetochore subunit sim4 (sim4) from Schizosaccharomyces pombe (strain 972 / ATCC 24843) (Fission yeast).